A 177-amino-acid chain; its full sequence is Large ribosomal subunit protein uL5c (177 aa).

The protein belongs to the universal ribosomal protein uL5 family. As to quaternary structure, part of the 50S ribosomal subunit; contacts the 5S rRNA.

It localises to the plastid. The protein resides in the chloroplast. Its function is as follows. Binds 5S rRNA, forms part of the central protuberance of the 50S subunit. This is Large ribosomal subunit protein uL5c (rpl5) from Cyanidioschyzon merolae (strain NIES-3377 / 10D) (Unicellular red alga).